Here is a 209-residue protein sequence, read N- to C-terminus: Ribonuclease HII (209 aa).

An RNase H type-2 domain is found at 18–209; it reads GLIAGVDEVG…FKPVKALLEG (192 aa). Residues Asp24, Glu25, and Asp116 each coordinate a divalent metal cation.

The protein belongs to the RNase HII family. It depends on Mn(2+) as a cofactor. Mg(2+) is required as a cofactor.

Its subcellular location is the cytoplasm. It catalyses the reaction Endonucleolytic cleavage to 5'-phosphomonoester.. Its function is as follows. Endonuclease that specifically degrades the RNA of RNA-DNA hybrids. This is Ribonuclease HII from Shewanella putrefaciens (strain CN-32 / ATCC BAA-453).